Here is a 165-residue protein sequence, read N- to C-terminus: 3-isopropylmalate dehydratase small subunit (165 aa).

It belongs to the LeuD family. LeuD type 2 subfamily. As to quaternary structure, heterodimer of LeuC and LeuD.

The catalysed reaction is (2R,3S)-3-isopropylmalate = (2S)-2-isopropylmalate. Its pathway is amino-acid biosynthesis; L-leucine biosynthesis; L-leucine from 3-methyl-2-oxobutanoate: step 2/4. Functionally, catalyzes the isomerization between 2-isopropylmalate and 3-isopropylmalate, via the formation of 2-isopropylmaleate. In Desulfovibrio desulfuricans (strain ATCC 27774 / DSM 6949 / MB), this protein is 3-isopropylmalate dehydratase small subunit.